Here is a 218-residue protein sequence, read N- to C-terminus: Molybdenum cofactor guanylyltransferase (218 aa).

GTP is bound by residues 16–18 (LAG), lysine 28, asparagine 56, aspartate 74, and aspartate 109. Mg(2+) is bound at residue aspartate 109.

Belongs to the MobA family. In terms of assembly, monomer. Mg(2+) serves as cofactor.

It is found in the cytoplasm. The enzyme catalyses Mo-molybdopterin + GTP + H(+) = Mo-molybdopterin guanine dinucleotide + diphosphate. Its function is as follows. Transfers a GMP moiety from GTP to Mo-molybdopterin (Mo-MPT) cofactor (Moco or molybdenum cofactor) to form Mo-molybdopterin guanine dinucleotide (Mo-MGD) cofactor. The chain is Molybdenum cofactor guanylyltransferase from Sinorhizobium fredii (strain NBRC 101917 / NGR234).